A 270-amino-acid chain; its full sequence is Type III pantothenate kinase (270 aa).

16-23 (EIGNTTAM) is a binding site for ATP. Residues Tyr106 and 113–116 (GADR) contribute to the substrate site. Asp115 functions as the Proton acceptor in the catalytic mechanism. Residue Asp136 participates in K(+) binding. Thr139 contacts ATP. Thr191 contacts substrate.

The protein belongs to the type III pantothenate kinase family. Homodimer. It depends on NH4(+) as a cofactor. Requires K(+) as cofactor.

The protein resides in the cytoplasm. It catalyses the reaction (R)-pantothenate + ATP = (R)-4'-phosphopantothenate + ADP + H(+). It functions in the pathway cofactor biosynthesis; coenzyme A biosynthesis; CoA from (R)-pantothenate: step 1/5. Its function is as follows. Catalyzes the phosphorylation of pantothenate (Pan), the first step in CoA biosynthesis. The protein is Type III pantothenate kinase of Chlorobium luteolum (strain DSM 273 / BCRC 81028 / 2530) (Pelodictyon luteolum).